A 1005-amino-acid chain; its full sequence is Retinoblastoma-related protein (1005 aa).

The domain A stretch occupies residues 404 to 605 (TPVSTAMTTA…EKGSSMYNSL (202 aa)). Residues 404-853 (TPVSTAMTTA…NEIFIPSVKP (450 aa)) form a pocket region. A spacer region spans residues 606-722 (TIARPNLSNE…HPTRGETCAE (117 aa)). The segment at 723–853 (TAVNLFFSKI…NEIFIPSVKP (131 aa)) is domain B. The span at 863–873 (VPKNPNNQVSE) shows a compositional bias: polar residues. Positions 863–899 (VPKNPNNQVSETNKKDESGPCPCPGSPKVSSFPSLPD) are disordered.

The protein belongs to the retinoblastoma protein (RB) family.

It is found in the nucleus. Its function is as follows. Regulator of biological processes that recruits a histone deacetylase to control gene transcription. May play a role in the entry into mitosis, negatively regulating the cell proliferation. Formation of stable complexes with geminiviridae replication-associated proteins may create a cellular environment which favors viral DNA replication. The polypeptide is Retinoblastoma-related protein (RBR) (Pilosella piloselloides (Glaucous king-devil hawkweed)).